A 114-amino-acid chain; its full sequence is T cell receptor beta variable 27 (114 aa).

A signal peptide spans 1–21 (MGPQLLGYVVLCLLGAGPLEA). In terms of domain architecture, Ig-like spans 22-114 (QVTQNPRYLI…TSLYFCASSL (93 aa)). A disulfide bond links C42 and C110. N103 carries an N-linked (GlcNAc...) asparagine glycan.

As to quaternary structure, alpha-beta TR is a heterodimer composed of an alpha and beta chain; disulfide-linked. The alpha-beta TR is associated with the transmembrane signaling CD3 coreceptor proteins to form the TR-CD3 (TcR or TCR). The assembly of alpha-beta TR heterodimers with CD3 occurs in the endoplasmic reticulum where a single alpha-beta TR heterodimer associates with one CD3D-CD3E heterodimer, one CD3G-CD3E heterodimer and one CD247 homodimer forming a stable octameric structure. CD3D-CD3E and CD3G-CD3E heterodimers preferentially associate with TR alpha and TR beta chains, respectively. The association of the CD247 homodimer is the last step of TcR assembly in the endoplasmic reticulum and is required for transport to the cell surface.

The protein resides in the cell membrane. Functionally, v region of the variable domain of T cell receptor (TR) beta chain that participates in the antigen recognition. Alpha-beta T cell receptors are antigen specific receptors which are essential to the immune response and are present on the cell surface of T lymphocytes. Recognize peptide-major histocompatibility (MH) (pMH) complexes that are displayed by antigen presenting cells (APC), a prerequisite for efficient T cell adaptive immunity against pathogens. Binding of alpha-beta TR to pMH complex initiates TR-CD3 clustering on the cell surface and intracellular activation of LCK that phosphorylates the ITAM motifs of CD3G, CD3D, CD3E and CD247 enabling the recruitment of ZAP70. In turn ZAP70 phosphorylates LAT, which recruits numerous signaling molecules to form the LAT signalosome. The LAT signalosome propagates signal branching to three major signaling pathways, the calcium, the mitogen-activated protein kinase (MAPK) kinase and the nuclear factor NF-kappa-B (NF-kB) pathways, leading to the mobilization of transcription factors that are critical for gene expression and essential for T cell growth and differentiation. The T cell repertoire is generated in the thymus, by V-(D)-J rearrangement. This repertoire is then shaped by intrathymic selection events to generate a peripheral T cell pool of self-MH restricted, non-autoaggressive T cells. Post-thymic interaction of alpha-beta TR with the pMH complexes shapes TR structural and functional avidity. The protein is T cell receptor beta variable 27 of Homo sapiens (Human).